The chain runs to 1073 residues: DNA-directed RNA polymerase subunit beta (1073 aa).

This sequence belongs to the RNA polymerase beta chain family. In plastids the minimal PEP RNA polymerase catalytic core is composed of four subunits: alpha, beta, beta', and beta''. When a (nuclear-encoded) sigma factor is associated with the core the holoenzyme is formed, which can initiate transcription.

The protein localises to the plastid. The protein resides in the chloroplast. It carries out the reaction RNA(n) + a ribonucleoside 5'-triphosphate = RNA(n+1) + diphosphate. DNA-dependent RNA polymerase catalyzes the transcription of DNA into RNA using the four ribonucleoside triphosphates as substrates. This chain is DNA-directed RNA polymerase subunit beta, found in Aethionema cordifolium (Lebanon stonecress).